A 616-amino-acid polypeptide reads, in one-letter code: Chaperone protein HscA (616 aa).

This sequence belongs to the heat shock protein 70 family.

Functionally, chaperone involved in the maturation of iron-sulfur cluster-containing proteins. Has a low intrinsic ATPase activity which is markedly stimulated by HscB. Involved in the maturation of IscU. The protein is Chaperone protein HscA of Klebsiella pneumoniae subsp. pneumoniae (strain ATCC 700721 / MGH 78578).